The primary structure comprises 347 residues: Protein YIPF3 (347 aa).

A disordered region spans residues 1-31; the sequence is MATPAAPASGVRNGAGPEWGGFEENIQGGGS. Ala-2 bears the N-acetylalanine; in Protein YIPF3, N-terminally processed mark. The Cytoplasmic portion of the chain corresponds to 2 to 145; it reads ATPAAPASGV…PIKMVNFPQK (144 aa). A helical membrane pass occupies residues 146 to 166; that stretch reads VAGELYGPLMLVFTLVAILLH. Topologically, residues 167–184 are lumenal; it reads GMKTSDTIIREGTLMGTA. The helical transmembrane segment at 185-205 threads the bilayer; sequence IGTCFGYWLGVSSFIYFLAYL. At 206–211 the chain is on the cytoplasmic side; it reads CNAQIT. The helical transmembrane segment at 212 to 234 threads the bilayer; that stretch reads MLQMLALLGYGLFGHCIVLFITY. Residues 235–237 are Lumenal-facing; it reads NIH. Residues 238 to 260 form a helical membrane-spanning segment; the sequence is LHALFYLFWLLVGGLSTLRMVAV. At 261–271 the chain is on the cytoplasmic side; it reads LVSRTVGPTQR. The chain crosses the membrane as a helical span at residues 272-292; the sequence is LLLCGTLAALHMLFLLYLHFA. Residues 293-347 lie on the Lumenal side of the membrane; it reads YHKVVEGILDTLEGPNIPPMQRVPRDIPAVLPAARLPVAVINATAKAIAVTLQSH. A glycan (N-linked (GlcNAc...) asparagine) is linked at Asn-334.

It belongs to the YIP1 family. In terms of assembly, interacts with YIPF4 and YIPF5. Expressed by splenocytes (at protein level).

The protein resides in the cell membrane. It is found in the golgi apparatus. The protein localises to the cis-Golgi network membrane. It localises to the cytoplasm. Functionally, involved in the maintenance of the Golgi structure. May play a role in hematopoiesis. The polypeptide is Protein YIPF3 (Yipf3) (Mus musculus (Mouse)).